The primary structure comprises 732 residues: MKSLPFPSPSRDLAGDSAQSLLLAARLHAPGSYLGIHSVPGGELVRVFQPYMSRVWLQTSSGFQVMECTHDAGIFEWKGEAVTRPYLLRLEHAETGVIEERYDPYAFPVQISGHDLYLFNEGRLLQAYHMLGTHQVKNQGVTGTRFAVWAPNAERVSVVGDFNHWDGRVCPMMARDHSGVWELFIPDLPGGTLYKYEIRNHSTGEILLKTDPYATRYELRPNNAALTPVESRYEWQDNDWMVQRAGWDWLHAPVNIYELHVGSWKRHPDGSFYSYQELADHLIPYLQEMGYSHVELLPISEHPLDESWGYQVTGYFAATSRYGNPEAFMYFVDKCHQAGIGVILDWVPAHFPQDSFSLARFDGTALYEHEDPRLGYHQDWGTYIFNYGRSEVKSFLLSSAHYWLSVFHIDGLRVDAVASMLYLDYSRKEGEWLPNRFGGRENLDAIDFLRELNTMVHGEFSGALTFAEESTSWPAVSRPTYLGGLGFSMKWNMGWMNDTLNYMQLDPIHRHYHHNELTFNQLYAYTENFILPLSHDEVVHGKKSLLDKMSGDVWQMFANLRLLFTYQMTCPGKKINFMGNEFAQGREWRVNHELDWYLLERDPHRGIQMLLRNLNHLYLDTPALHELDFFTEGFSWIDCHDSEQSVISYQRRARDGSFMLVILNFTPVPRTGYRVGVPESRTYQEVFNSDSTYYGGSNIGNPGDIVPTGQQWSGQVDSIIITLPPLAGIILI.

Catalysis depends on Asp-415, which acts as the Nucleophile. Glu-468 acts as the Proton donor in catalysis.

The protein belongs to the glycosyl hydrolase 13 family. GlgB subfamily. In terms of assembly, monomer.

It catalyses the reaction Transfers a segment of a (1-&gt;4)-alpha-D-glucan chain to a primary hydroxy group in a similar glucan chain.. It participates in glycan biosynthesis; glycogen biosynthesis. In terms of biological role, catalyzes the formation of the alpha-1,6-glucosidic linkages in glycogen by scission of a 1,4-alpha-linked oligosaccharide from growing alpha-1,4-glucan chains and the subsequent attachment of the oligosaccharide to the alpha-1,6 position. This is 1,4-alpha-glucan branching enzyme GlgB from Nitrosomonas eutropha (strain DSM 101675 / C91 / Nm57).